Here is a 351-residue protein sequence, read N- to C-terminus: DNA polymerase IV (351 aa).

The 185-residue stretch at 3–187 (ILFVDFDYFF…IDIDEVPGVG (185 aa)) folds into the UmuC domain. Mg(2+) is bound by residues Asp7 and Asp105. The active site involves Glu106.

The protein belongs to the DNA polymerase type-Y family. Requires Mg(2+) as cofactor.

It catalyses the reaction DNA(n) + a 2'-deoxyribonucleoside 5'-triphosphate = DNA(n+1) + diphosphate. Functionally, poorly processive, error-prone DNA polymerase involved in untargeted mutagenesis. Copies undamaged DNA at stalled replication forks, which arise in vivo from mismatched or misaligned primer ends. These misaligned primers can be extended by PolIV. Exhibits no 3'-5' exonuclease (proofreading) activity. May be involved in translesional synthesis. The chain is DNA polymerase IV from Sulfurisphaera tokodaii (strain DSM 16993 / JCM 10545 / NBRC 100140 / 7) (Sulfolobus tokodaii).